An 818-amino-acid chain; its full sequence is Elongation factor G, mitochondrial (818 aa).

The N-terminal 23 residues, 1–23, are a transit peptide targeting the mitochondrion; sequence MFLGRAASRTCRHSQPLRVAARA. Residues 67 to 96 are disordered; the sequence is MASTATATKPTEEASSSDQPPAPAHKLTDN. The segment covering 69–85 has biased composition (polar residues); sequence STATATKPTEEASSSDQ. Residues 102–390 enclose the tr-type G domain; that stretch reads TFQRNIGISA…GVCEYLPNPS (289 aa). Residues 111–118, 188–192, and 242–245 each bind GTP; these read AHIDSGKT, DTPGH, and NKMD.

The protein belongs to the TRAFAC class translation factor GTPase superfamily. Classic translation factor GTPase family. EF-G/EF-2 subfamily.

It localises to the mitochondrion. It participates in protein biosynthesis; polypeptide chain elongation. Its function is as follows. Mitochondrial GTPase that catalyzes the GTP-dependent ribosomal translocation step during translation elongation. During this step, the ribosome changes from the pre-translocational (PRE) to the post-translocational (POST) state as the newly formed A-site-bound peptidyl-tRNA and P-site-bound deacylated tRNA move to the P and E sites, respectively. Catalyzes the coordinated movement of the two tRNA molecules, the mRNA and conformational changes in the ribosome. This chain is Elongation factor G, mitochondrial, found in Coprinopsis cinerea (strain Okayama-7 / 130 / ATCC MYA-4618 / FGSC 9003) (Inky cap fungus).